The primary structure comprises 441 residues: ATP-dependent RNA helicase RhlB (441 aa).

A Q motif motif is present at residues 9–37 (QKFADFSLNKEIKTALNESGFEFCTPIQA). Residues 40-219 (LPILLQKKDI…YDHMNEPEKV (180 aa)) form the Helicase ATP-binding domain. 53-60 (AQTGTGKT) contacts ATP. Residues 165–168 (DEAD) carry the DEAD box motif. The Helicase C-terminal domain occupies 243–390 (KMRLLLSLIE…VTNYDSEGLL (148 aa)). Residues 401 to 441 (RKHNNRPQQGRNNSGRPQGRNGNRAGGRNGPRRHDQVRRHS) form a disordered region.

It belongs to the DEAD box helicase family. RhlB subfamily. Component of the RNA degradosome, which is a multiprotein complex involved in RNA processing and mRNA degradation.

It is found in the cytoplasm. The enzyme catalyses ATP + H2O = ADP + phosphate + H(+). Its function is as follows. DEAD-box RNA helicase involved in RNA degradation. Has RNA-dependent ATPase activity and unwinds double-stranded RNA. The chain is ATP-dependent RNA helicase RhlB from Shewanella woodyi (strain ATCC 51908 / MS32).